The sequence spans 315 residues: MKQDNQTGIKHKGEAKTARIPIKVVPLEEKLRKPEWIRAKLPTGQRFFEIKEILRNQKLHTVCEEASCPNIGECFSHGTATFMIMGDICTRRCPFCDVGHGRPNPLDPNEPQHLAESVAAMRLKYVVITSVDRDDLRDGGAQHFADCIQAIRASSPATRIEVLVPDFRGRLELALDILSATPPDVMNHNLETAPRLYKQARPGADYAHSLQLLKDYKTRNPDVTTKSGIMVGLGETDEEVLEVLADLRAHDVDMLTIGQYLQPSNGHLPVLRYVTPDQFKAFEKKAYDMGFRHAAVGAMVRSSYHADQQAREVIE.

7 residues coordinate [4Fe-4S] cluster: Cys-63, Cys-68, Cys-74, Cys-89, Cys-93, Cys-96, and Ser-303. In terms of domain architecture, Radical SAM core spans 75–292 (FSHGTATFMI…EKKAYDMGFR (218 aa)).

This sequence belongs to the radical SAM superfamily. Lipoyl synthase family. The cofactor is [4Fe-4S] cluster.

The protein resides in the cytoplasm. The catalysed reaction is [[Fe-S] cluster scaffold protein carrying a second [4Fe-4S](2+) cluster] + N(6)-octanoyl-L-lysyl-[protein] + 2 oxidized [2Fe-2S]-[ferredoxin] + 2 S-adenosyl-L-methionine + 4 H(+) = [[Fe-S] cluster scaffold protein] + N(6)-[(R)-dihydrolipoyl]-L-lysyl-[protein] + 4 Fe(3+) + 2 hydrogen sulfide + 2 5'-deoxyadenosine + 2 L-methionine + 2 reduced [2Fe-2S]-[ferredoxin]. It participates in protein modification; protein lipoylation via endogenous pathway; protein N(6)-(lipoyl)lysine from octanoyl-[acyl-carrier-protein]: step 2/2. Its function is as follows. Catalyzes the radical-mediated insertion of two sulfur atoms into the C-6 and C-8 positions of the octanoyl moiety bound to the lipoyl domains of lipoate-dependent enzymes, thereby converting the octanoylated domains into lipoylated derivatives. The sequence is that of Lipoyl synthase from Laribacter hongkongensis (strain HLHK9).